A 514-amino-acid polypeptide reads, in one-letter code: Voltage-gated potassium channel regulatory subunit KCNG1 (514 aa).

At 1–224 (MTLLPGDNSD…DMVEKPHSGL (224 aa)) the chain is on the cytoplasmic side. Residues 181–196 (EREDEEEALDSEDQES) show a composition bias toward acidic residues. The interval 181-205 (EREDEEEALDSEDQESEGPSTSEGR) is disordered. Residues 225-246 (PGKVFACLSVLFVTVTAVNLSV) form a helical membrane-spanning segment. The Extracellular segment spans residues 247–267 (STLPSLREEEEQGQCSQMCHN). A helical transmembrane segment spans residues 268 to 289 (VFIVESVCVGWFSLEFLLRFIQ). The Cytoplasmic portion of the chain corresponds to 290–300 (APSKFAFLRSP). The helical transmembrane segment at 301 to 321 (LTLIDLVAILPYYVTLLVDGA) threads the bilayer. The Extracellular segment spans residues 322 to 338 (ASSRRKPSTGNSYLDKV). Residues 339–359 (GLVLRVLRALRILYVMRLARH) traverse the membrane as a helical; Voltage-sensor segment. At 360-374 (SLGLQTLGLTARRCT) the chain is on the cytoplasmic side. A helical transmembrane segment spans residues 375 to 396 (REFGLLLLFLCVAIALFAPLLY). Topologically, residues 397–411 (VIENEMADSPEFTSI) are extracellular. Residues 412 to 423 (PACYWWAVITMT) constitute an intramembrane region (helical). Residues 424-429 (TVGYGD) carry the Selectivity filter motif. The stretch at 424-431 (TVGYGDMV) is an intramembrane region. Residues 432-438 (PRSTPGQ) are Extracellular-facing. A helical membrane pass occupies residues 439 to 467 (VVALSSILSGILLMAFPVTSIFHTFSRSY). The Cytoplasmic portion of the chain corresponds to 468–514 (LELKQEQERVLIRRAQYLIKTKSQLSGMSQDSDILFGSASSDTRDNN).

This sequence belongs to the potassium channel family. G (TC 1.A.1.2) subfamily. Kv6.1/KCNG1 sub-subfamily. As to quaternary structure, heterotetramer with KCNB1 or KCNB2.

The protein resides in the cell membrane. Functionally, regulatory alpha-subunit of the voltage-gated potassium (Kv) channel which, when coassembled with KCNB1 or KCNB2, can modulate their expression and their gating kinetics by acting on deactivation upon repolarization and inactivation during maintained depolarization. Potassium channel subunit that does not form functional channels by itself. The protein is Voltage-gated potassium channel regulatory subunit KCNG1 of Rattus norvegicus (Rat).